Reading from the N-terminus, the 765-residue chain is Ankyrin repeat and protein kinase domain-containing protein 1 (765 aa).

The region spanning 22-289 is the Protein kinase domain; sequence EGDWRLVASG…DITIETDILL (268 aa). Residues 28 to 36 and Lys51 contribute to the ATP site; that span reads VASGGFSQV. Catalysis depends on Asp145, which acts as the Proton acceptor. ANK repeat units follow at residues 361 to 390, 394 to 423, 427 to 456, 460 to 489, 493 to 522, 526 to 555, 559 to 588, 592 to 621, 625 to 654, 658 to 687, 691 to 720, and 724 to 753; these read NKVTPLHFLVAQGSVEQVRLLLAHEVDVDC, SGYTPLLIAAQDQQPDLCALLLAHGADANR, DGWAPLHFAAQNGDDGTARLLLDHGACVDA, EGWTPLHLAAQNNFENVARLLVSRQADPNL, EGKTPLHVAAYFGHVSLVKLLTSQGAELDA, NLRTPLHLAVERGKVRAIQHLLKSGAVPDA, SGYGPLHTAAARGKYLICKMLLRYGASLEL, QGWTPLHLAAYKGHLEIIHLLAESHANMGA, VNWTPLHLAARHGEEAVVSALLQCGADPNA, SGWTPLHLAVQRSTFLSVINLLEHHANVHA, VGWTPAHLAALKGNTAILKVLVEAGAQLDV, and VSCTPLQLALRSRKQGIMSFLEGKEPSVAT.

Belongs to the protein kinase superfamily. TKL Ser/Thr protein kinase family. As to expression, highly expressed in brain and weakly expressed in placenta and spinal cord.

The catalysed reaction is L-seryl-[protein] + ATP = O-phospho-L-seryl-[protein] + ADP + H(+). It catalyses the reaction L-threonyl-[protein] + ATP = O-phospho-L-threonyl-[protein] + ADP + H(+). The sequence is that of Ankyrin repeat and protein kinase domain-containing protein 1 (ANKK1) from Homo sapiens (Human).